A 127-amino-acid polypeptide reads, in one-letter code: Protein yippee-like 4 (127 aa).

Residues 27 to 124 (RTYSCVHCRA…IEMSHMVKDN (98 aa)) enclose the Yippee domain. Positions 31, 34, 87, and 90 each coordinate Zn(2+). Residues T92 and T93 each carry the phosphothreonine modification. Residue Y98 is modified to Phosphotyrosine.

This sequence belongs to the yippee family.

The protein localises to the nucleus. The protein resides in the nucleolus. This is Protein yippee-like 4 (YPEL4) from Chlorocebus aethiops (Green monkey).